The chain runs to 192 residues: UPF0312 protein Pput_4854 (192 aa).

The N-terminal stretch at 1–23 (MLKKTFAALALGTALLSAGQAMA) is a signal peptide.

This sequence belongs to the UPF0312 family. Type 1 subfamily.

The protein localises to the periplasm. The protein is UPF0312 protein Pput_4854 of Pseudomonas putida (strain ATCC 700007 / DSM 6899 / JCM 31910 / BCRC 17059 / LMG 24140 / F1).